Here is a 249-residue protein sequence, read N- to C-terminus: Fatty acid elongase 5 (249 aa).

3 helical membrane passes run 23-43, 68-88, and 100-120; these read VFVNYPVLIGCHIGYLVVIVL, VALSLVMAINLGQFLVYGVFN, and WIFVHYATKFLDMFDTYFIVL. Positions 131–135 match the HxxHH motif motif; it reads HIYHH. His-134 (nucleophile) is an active-site residue. A run of 4 helical transmembrane segments spans residues 138–158, 159–179, 193–213, and 217–236; these read IGFIWGLLLHHGVANGTAFFG, AWINSAVHALMYFHYLYTSLG, MIQFALCILHAVLAVVAHSPI, and WAVLQLCYHLTLLYLFMRFY.

It belongs to the ELO family.

The protein localises to the membrane. The enzyme catalyses an acyl-CoA + malonyl-CoA + H(+) = a 3-oxoacyl-CoA + CO2 + CoA. Its pathway is lipid metabolism; polyunsaturated fatty acid biosynthesis. In terms of biological role, involved in the synthesis of fatty acids. Elongates C20 polyunsaturated fatty acids (PUFAs) with a preference for n-6 PUFAs. This is Fatty acid elongase 5 from Leishmania major.